We begin with the raw amino-acid sequence, 252 residues long: Imidazole glycerol phosphate synthase subunit HisF (252 aa).

Active-site residues include aspartate 13 and aspartate 132.

It belongs to the HisA/HisF family. As to quaternary structure, heterodimer of HisH and HisF.

It localises to the cytoplasm. It catalyses the reaction 5-[(5-phospho-1-deoxy-D-ribulos-1-ylimino)methylamino]-1-(5-phospho-beta-D-ribosyl)imidazole-4-carboxamide + L-glutamine = D-erythro-1-(imidazol-4-yl)glycerol 3-phosphate + 5-amino-1-(5-phospho-beta-D-ribosyl)imidazole-4-carboxamide + L-glutamate + H(+). Its pathway is amino-acid biosynthesis; L-histidine biosynthesis; L-histidine from 5-phospho-alpha-D-ribose 1-diphosphate: step 5/9. In terms of biological role, IGPS catalyzes the conversion of PRFAR and glutamine to IGP, AICAR and glutamate. The HisF subunit catalyzes the cyclization activity that produces IGP and AICAR from PRFAR using the ammonia provided by the HisH subunit. This is Imidazole glycerol phosphate synthase subunit HisF from Campylobacter curvus (strain 525.92).